Reading from the N-terminus, the 574-residue chain is UvrABC system protein C (574 aa).

The 81-residue stretch at 12 to 92 (KKPGVYIFKN…IYIHKPKYNI (81 aa)) folds into the GIY-YIG domain. Residues 200–235 (EEVKNYLQKAMMDYAKIKNYEKAAQMRDTLFKLENL) enclose the UVR domain.

This sequence belongs to the UvrC family. Interacts with UvrB in an incision complex.

Its subcellular location is the cytoplasm. In terms of biological role, the UvrABC repair system catalyzes the recognition and processing of DNA lesions. UvrC both incises the 5' and 3' sides of the lesion. The N-terminal half is responsible for the 3' incision and the C-terminal half is responsible for the 5' incision. This chain is UvrABC system protein C, found in Petrotoga mobilis (strain DSM 10674 / SJ95).